We begin with the raw amino-acid sequence, 327 residues long: MENGIKESQVGLNKNGTHAILPSPVVSEGHKNHKSILNSLMSGALAGAVAKTAVAPLDRTKIIFQVSSNRFSAKEAYRLIYRTYLNEGFLSLWRGNSATMVRVIPYAAIQFCAHEQYKKLLGSYYGFQGSALTPIPRLLAGALAGTTATIITYPLDLVRARMAVTPKEMYSNIIHVFMRMSREEGLKSLYRGFTPTVLGVIPYAGISFFTYETLKKLHAEHSGRTQPYPFERLLFGACAGLFGQSASYPLDVVRRRMQTAGVTGHAYGSIIGTMQEIVAEEGVIRGLYKGLSMNWVKGPVAVGISFTTFDLTQILLKKLQRLSDIQR.

Solcar repeat units lie at residues 34 to 120, 132 to 217, and 227 to 315; these read KSIL…YKKL, LTPI…LKKL, and PYPF…TQIL. 6 helical membrane-spanning segments follow: residues 36–56, 92–112, 138–158, 189–209, 233–253, and 296–316; these read ILNS…AVAP, LWRG…IQFC, LLAG…LDLV, LYRG…ISFF, LLFG…LDVV, and VKGP…QILL.

Belongs to the mitochondrial carrier (TC 2.A.29) family.

It is found in the mitochondrion inner membrane. The catalysed reaction is ADP(out) + CoA(in) = ADP(in) + CoA(out). It carries out the reaction 3'-dephospho-CoA(in) + ADP(out) = 3'-dephospho-CoA(out) + ADP(in). The enzyme catalyses adenosine 3',5'-bisphosphate(in) + ADP(out) = adenosine 3',5'-bisphosphate(out) + ADP(in). It catalyses the reaction AMP(in) + ADP(out) = AMP(out) + ADP(in). The catalysed reaction is dADP(in) + ADP(out) = dADP(out) + ADP(in). It carries out the reaction ADP(in) + ATP(out) = ADP(out) + ATP(in). In terms of biological role, mitochondrial carrier mediating the transport of coenzyme A (CoA) in mitochondria in exchange for intramitochondrial (deoxy)adenine nucleotides and adenosine 3',5'-diphosphate. The polypeptide is Mitochondrial coenzyme A transporter SLC25A42 (slc25a42) (Xenopus tropicalis (Western clawed frog)).